The following is a 724-amino-acid chain: WD repeat-containing protein 91 (724 aa).

Residues 178-207 adopt a coiled-coil conformation; it reads FDSEVQRITSLQEDNEQLRQTVFALQGESR. The disordered stretch occupies residues 249–365; sequence SRNFFSTFLP…PDQTDSANQT (117 aa). Polar residues-rich tracts occupy residues 270-279 and 303-315; these read GPQSSPTQSA and SVSS…STSH. Phosphoserine is present on Ser274. The span at 322–333 shows a compositional bias: basic and acidic residues; sequence QDHEKERKELFS. Polar residues predominate over residues 349–365; it reads DTQTEAPPDQTDSANQT. 7 WD repeats span residues 389-428, 431-471, 499-532, 537-576, 579-618, 641-679, and 686-724; these read EHHS…QTKA, MSKS…CLYE, AHSG…QQLQ, PGPV…SALS, AHDG…VKQS, VQVP…AGLE, and GHKA…AQKP.

It belongs to the WD repeat WDR91 family.

The protein localises to the early endosome membrane. It localises to the late endosome membrane. In terms of biological role, functions as a negative regulator of the PI3 kinase/PI3K activity associated with endosomal membranes. By modifying the phosphatidylinositol 3-phosphate/PtdInsP3 content of endosomal membranes may regulate endosome fusion, recycling, sorting and early to late endosome transport. This Danio rerio (Zebrafish) protein is WD repeat-containing protein 91 (wdr91).